A 127-amino-acid chain; its full sequence is Protein ApaG (127 aa).

In terms of domain architecture, ApaG spans 3-127 (NERKYSIKVE…FILSVPRVLH (125 aa)).

The sequence is that of Protein ApaG from Nitrosomonas europaea (strain ATCC 19718 / CIP 103999 / KCTC 2705 / NBRC 14298).